The following is a 214-amino-acid chain: uncharacterized protein (214 aa).

Transmembrane regions (helical) follow at residues 18-38 (LLLLCIGGFYALGVSLSNTFV), 51-71 (DLALYNLAVVTMQPLTFIVAG), 80-100 (ILVLRLGVSCLAVFFVTVLLV), 108-128 (LLVLGALLGVGYGFYWLAFNV), and 145-165 (FFGVLTSSAGMIGPIAAGYII).

The protein localises to the cell membrane. This is an uncharacterized protein from Geobacillus stearothermophilus (Bacillus stearothermophilus).